The sequence spans 193 residues: Dirigent protein 11 (193 aa).

Positions 1–33 (MLQITNMATPFLLLLLPLIFSTVLLLTITVTQS) are cleaved as a signal peptide. 2 N-linked (GlcNAc...) asparagine glycosylation sites follow: Asn78 and Asn136.

This sequence belongs to the plant dirigent protein family. In terms of assembly, homodimer.

The protein localises to the secreted. It is found in the extracellular space. Its subcellular location is the apoplast. Functionally, dirigent proteins impart stereoselectivity on the phenoxy radical-coupling reaction, yielding optically active lignans from two molecules of coniferyl alcohol in the biosynthesis of lignans, flavonolignans, and alkaloids and thus plays a central role in plant secondary metabolism. The polypeptide is Dirigent protein 11 (DIR11) (Arabidopsis thaliana (Mouse-ear cress)).